A 141-amino-acid chain; its full sequence is Large ribosomal subunit protein uL11 (141 aa).

This sequence belongs to the universal ribosomal protein uL11 family. As to quaternary structure, part of the ribosomal stalk of the 50S ribosomal subunit. Interacts with L10 and the large rRNA to form the base of the stalk. L10 forms an elongated spine to which L12 dimers bind in a sequential fashion forming a multimeric L10(L12)X complex. One or more lysine residues are methylated.

Functionally, forms part of the ribosomal stalk which helps the ribosome interact with GTP-bound translation factors. This chain is Large ribosomal subunit protein uL11, found in Nostoc punctiforme (strain ATCC 29133 / PCC 73102).